The following is a 373-amino-acid chain: Tryptophan--tRNA ligase (373 aa).

The 'HIGH' region motif lies at 79–87 (PSGKFHFGH). Positions 257–261 (KMSSS) match the 'KMSKS' region motif.

The protein belongs to the class-I aminoacyl-tRNA synthetase family.

The protein localises to the cytoplasm. The catalysed reaction is tRNA(Trp) + L-tryptophan + ATP = L-tryptophyl-tRNA(Trp) + AMP + diphosphate + H(+). The chain is Tryptophan--tRNA ligase from Hyperthermus butylicus (strain DSM 5456 / JCM 9403 / PLM1-5).